Here is a 205-residue protein sequence, read N- to C-terminus: Small ribosomal subunit protein uS4 (205 aa).

Residues 1-16 (MSKRESSKYKIDRRMG) show a composition bias toward basic and acidic residues. The segment at 1 to 46 (MSKRESSKYKIDRRMGENIWGRPKSPVNRREYGPGQHGQRRKGKLS) is disordered. The region spanning 94–157 (SRLDAIVYRA…KQLVIVLEAV (64 aa)) is the S4 RNA-binding domain.

This sequence belongs to the universal ribosomal protein uS4 family. As to quaternary structure, part of the 30S ribosomal subunit. Contacts protein S5. The interaction surface between S4 and S5 is involved in control of translational fidelity.

Its function is as follows. One of the primary rRNA binding proteins, it binds directly to 16S rRNA where it nucleates assembly of the body of the 30S subunit. Functionally, with S5 and S12 plays an important role in translational accuracy. The chain is Small ribosomal subunit protein uS4 from Rhizobium johnstonii (strain DSM 114642 / LMG 32736 / 3841) (Rhizobium leguminosarum bv. viciae).